The following is a 344-amino-acid chain: Aspartate-semialdehyde dehydrogenase (344 aa).

NADP(+) is bound by residues 10-13 and 38-39; these read TGQV and RS. A phosphate-binding site is contributed by Arg101. Cys131 serves as the catalytic Acyl-thioester intermediate. A substrate-binding site is contributed by Gln158. Residue 161–162 coordinates NADP(+); the sequence is SG. Lys228 contacts phosphate. Arg250 serves as a coordination point for substrate. His257 functions as the Proton acceptor in the catalytic mechanism. Asn326 is a binding site for NADP(+).

This sequence belongs to the aspartate-semialdehyde dehydrogenase family. In terms of assembly, homodimer.

It carries out the reaction L-aspartate 4-semialdehyde + phosphate + NADP(+) = 4-phospho-L-aspartate + NADPH + H(+). Its pathway is amino-acid biosynthesis; L-lysine biosynthesis via DAP pathway; (S)-tetrahydrodipicolinate from L-aspartate: step 2/4. The protein operates within amino-acid biosynthesis; L-methionine biosynthesis via de novo pathway; L-homoserine from L-aspartate: step 2/3. It functions in the pathway amino-acid biosynthesis; L-threonine biosynthesis; L-threonine from L-aspartate: step 2/5. Catalyzes the NADPH-dependent formation of L-aspartate-semialdehyde (L-ASA) by the reductive dephosphorylation of L-aspartyl-4-phosphate. The sequence is that of Aspartate-semialdehyde dehydrogenase from Corynebacterium melassecola.